The chain runs to 258 residues: Acyl-[acyl-carrier-protein]--UDP-N-acetylglucosamine O-acyltransferase (258 aa).

It belongs to the transferase hexapeptide repeat family. LpxA subfamily. As to quaternary structure, homotrimer.

It localises to the cytoplasm. The enzyme catalyses a (3R)-hydroxyacyl-[ACP] + UDP-N-acetyl-alpha-D-glucosamine = a UDP-3-O-[(3R)-3-hydroxyacyl]-N-acetyl-alpha-D-glucosamine + holo-[ACP]. It participates in glycolipid biosynthesis; lipid IV(A) biosynthesis; lipid IV(A) from (3R)-3-hydroxytetradecanoyl-[acyl-carrier-protein] and UDP-N-acetyl-alpha-D-glucosamine: step 1/6. In terms of biological role, involved in the biosynthesis of lipid A, a phosphorylated glycolipid that anchors the lipopolysaccharide to the outer membrane of the cell. The sequence is that of Acyl-[acyl-carrier-protein]--UDP-N-acetylglucosamine O-acyltransferase from Pseudomonas putida (strain GB-1).